The chain runs to 158 residues: C-type lectin (158 aa).

Residues 1–23 (MWQFTVVSLGWLAVFLSLSGAKG) form the signal peptide. 3 cysteine pairs are disulfide-bonded: cysteine 26-cysteine 37, cysteine 54-cysteine 154, and cysteine 129-cysteine 146. A C-type lectin domain is found at 33–155 (RNGVCNKLFP…CASLHPFICQ (123 aa)). Residues 119–121 (EPN) carry the Mannose-binding motif. Positions 127, 142, and 143 each coordinate Ca(2+).

The protein belongs to the true venom lectin family. Expressed by the venom gland.

The protein resides in the secreted. Its function is as follows. Mannose-binding lectin which recognizes specific carbohydrate structures and agglutinates a variety of animal cells by binding to cell-surface glycoproteins and glycolipids. May be a calcium-dependent lectin. This is C-type lectin from Cerberus rynchops (Dog-faced water snake).